The chain runs to 240 residues: Protein unc-119 homolog A (240 aa).

Residues 1–11 (MKVKKGGGGAG) show a composition bias toward gly residues. The tract at residues 1–59 (MKVKKGGGGAGTATESAPGPSGQSVAPIPQPPAESESGSESEPDAGPGPRPGPLQRKQP) is required for midbody localization. Positions 1–61 (MKVKKGGGGA…GPLQRKQPIG (61 aa)) are disordered. A phosphoserine; by CK2 mark is found at Ser37, Ser39, and Ser41. The segment at 121-240 (LDPNAGRFVR…KADYSYSGTP (120 aa)) is required for centrosome localization. Tyr131 is a binding site for tetradecanoate.

Belongs to the PDE6D/unc-119 family. Interacts with CABP4; in the absence of calcium. Interacts with DNM1; leading to a decrease of DNM1 GTPase activity. May interact with GTP-bound ARL1. Interacts with ARL2 and ARL3 (GTP-bound forms); this promotes the release of myyristoylated cargo proteins. Found in a complex with ARL3, RP2 and UNC119; RP2 induces hydrolysis of GTP ARL3 in the complex, leading to the release of UNC119. Interacts with NPHP3 (when myristoylated). Interacts with CYS1 (when myristoylated). Interacts with MACIR; interaction only takes place when UNC119 is not liganded with myristoylated proteins. Interacts with LCK; this interaction plays a crucial role in activation of LCK. Interacts with FYN. Interacts with RAB11A; in a cell cycle-dependent manner. Interacts with LYN (via SH2 and SH3 domains); leading to LYN activation. Found in a complex with ABL1, ABL2, CRK and UNC119; leading to the inhibition of CRK phosphorylation by ABL kinases. Interacts with CD44; leading to Shigella invasion. Interacts with KLHL18 (via kelch repeats). Interacts with PPP3CA, PPP3CB and PPP3CC. Interacts with USP48; this interaction promotes UNC119 stability. In terms of processing, phosphorylation suppresses its interaction with KLHL18 and down-regulates its KLHL18-mediated degradation. Phosphorylated more under light conditions than dark conditions. Dephosphorylated by calcineurin. As to expression, abundantly expressed in retina, in photoreceptor synapses and inner segments. Expressed in a much lesser extent in several other tissues.

The protein localises to the cytoplasm. It localises to the cytoskeleton. The protein resides in the microtubule organizing center. It is found in the centrosome. Its subcellular location is the spindle pole. The protein localises to the spindle. Its function is as follows. Involved in synaptic functions in photoreceptor cells, the signal transduction in immune cells as a Src family kinase activator, endosome recycling, the uptake of bacteria and endocytosis, protein trafficking in sensory neurons and as lipid-binding chaperone with specificity for a diverse subset of myristoylated proteins. Specifically binds the myristoyl moiety of a subset of N-terminally myristoylated proteins and is required for their localization. Binds myristoylated GNAT1 and is required for G-protein localization and trafficking in sensory neurons. Probably plays a role in trafficking proteins in photoreceptor cells. Plays important roles in mediating Src family kinase signals for the completion of cytokinesis via RAB11A. The chain is Protein unc-119 homolog A (UNC119) from Homo sapiens (Human).